Here is a 780-residue protein sequence, read N- to C-terminus: Protein AMEIOTIC 1 (780 aa).

2 disordered regions span residues 32–60 and 237–327; these read KKKTSSSHSRNGKDDVNHDSTIQPRSPLS and APKE…RWSA. A compositionally biased stretch (polar residues) spans 50-60; it reads DSTIQPRSPLS. 2 stretches are compositionally biased toward basic and acidic residues: residues 263–291 and 309–327; these read EVKRSERNCKRKREAEASSKDNNGDEGKK and RTVESKDGDPRHGKDRWSA. The stretch at 448–547 forms a coiled coil; the sequence is VEELTEEVNG…LEEQVTYLSS (100 aa).

It is found in the nucleus. The protein resides in the chromosome. In terms of biological role, plays a fundamental role in building the proper chromosome structure at the beginning of meiosis in male meiocytes. Required for the transition from leptotene to zygotene in meiocytes. Required for homologous chromosome pairing, and initiation and progression of meiotic recombination. Regulates meiocyte cytoskeleton organization. The polypeptide is Protein AMEIOTIC 1 (Zea mays (Maize)).